The following is an 879-amino-acid chain: Fanconi anemia core complex-associated protein 100 (879 aa).

As to quaternary structure, belongs to the multisubunit FA complex composed of FANCA, FANCB, FANCC, FANCE, FANCF, FANCG, FANCL/PHF9, FANCM, FAAP24 and FAAP100. Forms a subcomplex with FANCB and FANCL.

Its subcellular location is the nucleus. Its function is as follows. Plays a role in Fanconi anemia-associated DNA damage response network. Regulates FANCD2 monoubiquitination and the stability of the FA core complex. Induces chromosomal instability as well as hypersensitivity to DNA cross-linking agents, when repressed. This is Fanconi anemia core complex-associated protein 100 from Mus musculus (Mouse).